The primary structure comprises 110 residues: MKFVLLFGVLLVTLFSYSSAEMLDDFDQADEDELLSLIEKEEARKDCIPKHHECTSNKHGCCKGHLFKYKCQCTTVVTQSGEETERCFCGTPPHCKAAELVVGFGKKIFG.

The N-terminal stretch at 1–20 (MKFVLLFGVLLVTLFSYSSA) is a signal peptide. Positions 21–44 (EMLDDFDQADEDELLSLIEKEEAR) are excised as a propeptide. Disulfide bonds link cysteine 47–cysteine 62, cysteine 54–cysteine 71, cysteine 61–cysteine 89, and cysteine 73–cysteine 87.

The protein belongs to the neurotoxin 19 (CSTX) family. 03 subfamily. Expressed by the venom gland.

It is found in the secreted. The chain is U1-lycotoxin-Ls1bb from Lycosa singoriensis (Wolf spider).